The chain runs to 286 residues: L-cysteine S-thiosulfotransferase subunit SoxA (286 aa).

The N-terminal stretch at 1–28 is a signal peptide; that stretch reads MKKTIQRGLFTGALVLLTAMTSKPAHAA. Cys106 and Cys137 form a disulfide bridge. Residues 180–286 enclose the Cytochrome c domain; that stretch reads DAYMKGKEMF…LKFNGPASRK (107 aa). Cys200 and His204 together coordinate heme. Residue Arg243 participates in substrate binding. Cys247 provides a ligand contact to heme. Cys247 (cysteine persulfide intermediate) is an active-site residue.

The protein belongs to the SoxA family. Heterodimer of SoxA and SoxX. The SoxAX complex interacts with CT1020, SoxAX-binding protein SaxB (SoxK); this interaction stimulates catalytic activity of the complex. Heme is required as a cofactor. Post-translationally, cysteine persulfide at Cys-247.

It localises to the periplasm. It carries out the reaction L-cysteinyl-[SoxY protein] + thiosulfate + 2 Fe(III)-[cytochrome c] = S-sulfosulfanyl-L-cysteinyl-[SoxY protein] + 2 Fe(II)-[cytochrome c] + 2 H(+). The catalysed reaction is S-sulfanyl-L-cysteinyl-[SoxY protein] + thiosulfate + 2 Fe(III)-[cytochrome c] = S-(2-sulfodisulfanyl)-L-cysteinyl-[SoxY protein] + 2 Fe(II)-[cytochrome c] + 2 H(+). Functionally, C-type monoheme cytochrome, which is part of the SoxAX cytochrome complex involved in sulfur oxidation. The SoxAX complex catalyzes the formation of a heterodisulfide bond between the conserved cysteine residue on a sulfur carrier SoxYZ complex subunit SoxY and thiosulfate or other inorganic sulfur substrates. This leads to the liberation of two electrons, which may be transferred from the SoxAX complex to another cytochrome c and which then may be used for reductive CO(2) fixation. The protein is L-cysteine S-thiosulfotransferase subunit SoxA of Chlorobaculum thiosulfatiphilum (Chlorobium limicola f.sp. thiosulfatophilum).